Here is a 119-residue protein sequence, read N- to C-terminus: uncharacterized protein (119 aa).

This is an uncharacterized protein from Escherichia coli (Bacteriophage T4).